Consider the following 581-residue polypeptide: Pyridine nucleotide-disulfide oxidoreductase domain-containing protein 2 (581 aa).

38–71 (VVIGAGHNGLVAAAYLQRLGVNTAVFERRHVIGG) contacts FAD.

It belongs to the carotenoid/retinoid oxidoreductase family. Interacts with COX5B; this interaction may contribute to localize PYROXD2 to the inner face of the inner mitochondrial membrane.

The protein localises to the mitochondrion matrix. Functionally, probable oxidoreductase that may play a role as regulator of mitochondrial function. This is Pyridine nucleotide-disulfide oxidoreductase domain-containing protein 2 from Homo sapiens (Human).